Reading from the N-terminus, the 332-residue chain is Tetraacyldisaccharide 4'-kinase (332 aa).

An ATP-binding site is contributed by 53–60 (SVGGNGKT).

Belongs to the LpxK family.

It carries out the reaction a lipid A disaccharide + ATP = a lipid IVA + ADP + H(+). Its pathway is glycolipid biosynthesis; lipid IV(A) biosynthesis; lipid IV(A) from (3R)-3-hydroxytetradecanoyl-[acyl-carrier-protein] and UDP-N-acetyl-alpha-D-glucosamine: step 6/6. Functionally, transfers the gamma-phosphate of ATP to the 4'-position of a tetraacyldisaccharide 1-phosphate intermediate (termed DS-1-P) to form tetraacyldisaccharide 1,4'-bis-phosphate (lipid IVA). This is Tetraacyldisaccharide 4'-kinase from Haemophilus influenzae (strain 86-028NP).